We begin with the raw amino-acid sequence, 100 residues long: Esterase PE11 (100 aa).

In terms of domain architecture, PE spans 4–94 (VTTRPDSIGE…TSYWLTELAN (91 aa)).

The protein belongs to the mycobacterial PE family.

The protein resides in the secreted. It is found in the cell wall. It carries out the reaction an acetyl ester + H2O = an aliphatic alcohol + acetate + H(+). The catalysed reaction is a butanoate ester + H2O = an aliphatic alcohol + butanoate + H(+). It catalyses the reaction an octanoate ester + H2O = an aliphatic alcohol + octanoate + H(+). Involved in cell wall lipids remodeling and in virulence. Restricts the biofilm growth and is essential for the optimal intracellular survival of M.tuberculosis. Shows esterase activity with a preference for short-chain esters, particularly pNP-acetate (C2) and pNP-butyrate (C4). Has weaker activity with pNP-octanoate (C8), pNP-laurate (C12) and pNP-myristate (C14). Shows weak long-chain triacylglycerol (TAG) hydrolase activity in vitro. Not necessary for PPE17 stability or for its localization on the mycobacterial surface. In Mycobacterium tuberculosis (strain ATCC 25618 / H37Rv), this protein is Esterase PE11.